The chain runs to 201 residues: Protease (201 aa).

Active-site residues include His-56, Asp-73, and Cys-121.

This sequence belongs to the peptidase C5 family. In terms of assembly, interacts with protease cofactor pVI-C; this interaction is necessary for protease activation.

Its subcellular location is the virion. The protein resides in the host nucleus. It carries out the reaction Cleaves proteins of the adenovirus and its host cell at two consensus sites: -Yaa-Xaa-Gly-Gly-|-Xaa- and -Yaa-Xaa-Gly-Xaa-|-Gly- (in which Yaa is Met, Ile or Leu, and Xaa is any amino acid).. Its activity is regulated as follows. Requires DNA and protease cofactor for maximal activation. Inside nascent virions, becomes partially activated by binding to the viral DNA, allowing it to cleave the cofactor that binds to the protease and fully activates it. Actin, like the viral protease cofactor, seems to act as a cofactor in the cleavage of cytokeratin 18 and of actin itself. Its function is as follows. Cleaves viral precursor proteins (pTP, pIIIa, pVI, pVII, pVIII, and pX) inside newly assembled particles giving rise to mature virions. Protease complexed to its cofactor slides along the viral DNA to specifically locate and cleave the viral precursors. Mature virions have a weakened organization compared to the unmature virions, thereby facilitating subsequent uncoating. Without maturation, the particle lacks infectivity and is unable to uncoat. Late in adenovirus infection, in the cytoplasm, may participate in the cytoskeleton destruction. Cleaves host cell cytoskeletal keratins K7 and K18. The protein is Protease of Homo sapiens (Human).